Consider the following 857-residue polypeptide: MAFSAPTFSLANLLNGSYGVDTPEEVERVRSEQREEAAAACRNYRPLPAVDVSESVTEDAHSLRTPDGAPSEEVSVEFVTYGAEDYLEKSDDELSVAFETMVKPMRIGQLWCPAFNKCSFISSIAMARALLLAPRTSHRTMKGFEDLVAAIYTKSDFYYDEECEADDIQIDVSSRDVPGYSFEPWSRTSGFEPPPICEACDMIMYQCPCFDFNALKKSCAERTFADDYVIEGLDGVVDNATLLSNLGPFLVPVKCQYEKCPTPTVAIPPSLNRATDRVDINLVQSICDSTLPTHSNYDDSFHQVFVESADYSIDLDHVRLRQSDLIAKIPDSGHMIPVLSTGSGHKRVGTTKEVLTAIKKRNADVPELGDSVNLSRLSKAVAERFFISYINGNSLASSNFVNVVSNFHDYMEKWKSSGLSYDDLPDLHAENLQFYDHMIKSDVKPVVSDTLNIDRPVPATITYHKKGITSQFSPLFTALFERFQRCLRERIILPVGKISSLEMAGFDVKNKHCLEIDLSKFDKSQGEFHLMIQEHILNGLGCPAPITKWWCDFHRFSYIRDRRAGVGMPISFQRRTGDAFTYFGNTIVTMAEFAWCYDTDQFEKLLFSGDDSLGFSVLPPVGDPSKFTTLFNMEAKVMEPAVPYICSKFLLSDEFGNTFSVPDPLREVQRLGTKKIPYSDNDEFLFAHFMSFVDRLKFLDRMTQSCIDQLSLFFELKYRKSGAEAALMLGAFKKYTANFQSYKELYYSDRRQCELINSFSCVELRIERSSSTKQRKKKDGIERRRSDKRRTPTGSYGGGEKTETKVSHEESTGTRSQKSQREGAFKSQIVPLPTILSGGWSGTDRAPPCEHGGIIRI.

The region spanning 511 to 624 (KHCLEIDLSK…FSVLPPVGDP (114 aa)) is the RdRp catalytic domain. Positions 772–857 (TKQRKKKDGI…PCEHGGIIRI (86 aa)) are disordered. Residues 800–812 (EKTETKVSHEEST) are compositionally biased toward basic and acidic residues.

It belongs to the ssRNA positive-strand viruses RNA-directed RNA polymerase family. As to quaternary structure, interacts with replication protein 1a.

It carries out the reaction RNA(n) + a ribonucleoside 5'-triphosphate = RNA(n+1) + diphosphate. In terms of biological role, RNA-dependent RNA polymerase which replicates the viral genome composed of 3 RNA segments, RNA1, RNA2 and RNA3. The sequence is that of RNA-directed RNA polymerase 2a from Cucumis sativus (Cucumber).